A 192-amino-acid chain; its full sequence is Peptidyl-tRNA hydrolase (192 aa).

Y17 contributes to the tRNA binding site. H22 acts as the Proton acceptor in catalysis. TRNA contacts are provided by F68, N70, and N116.

It belongs to the PTH family. Monomer.

It is found in the cytoplasm. It catalyses the reaction an N-acyl-L-alpha-aminoacyl-tRNA + H2O = an N-acyl-L-amino acid + a tRNA + H(+). Its function is as follows. Hydrolyzes ribosome-free peptidyl-tRNAs (with 1 or more amino acids incorporated), which drop off the ribosome during protein synthesis, or as a result of ribosome stalling. In terms of biological role, catalyzes the release of premature peptidyl moieties from peptidyl-tRNA molecules trapped in stalled 50S ribosomal subunits, and thus maintains levels of free tRNAs and 50S ribosomes. This chain is Peptidyl-tRNA hydrolase, found in Hydrogenovibrio crunogenus (strain DSM 25203 / XCL-2) (Thiomicrospira crunogena).